Reading from the N-terminus, the 423-residue chain is UDP-N-acetylglucosamine 1-carboxyvinyltransferase 2 (423 aa).

23–24 (KN) contacts phosphoenolpyruvate. UDP-N-acetyl-alpha-D-glucosamine is bound at residue R96. C120 functions as the Proton donor in the catalytic mechanism. 2-(S-cysteinyl)pyruvic acid O-phosphothioketal is present on C120. Residues 125–129 (RPIDL), D309, and V331 contribute to the UDP-N-acetyl-alpha-D-glucosamine site.

Belongs to the EPSP synthase family. MurA subfamily.

It localises to the cytoplasm. It catalyses the reaction phosphoenolpyruvate + UDP-N-acetyl-alpha-D-glucosamine = UDP-N-acetyl-3-O-(1-carboxyvinyl)-alpha-D-glucosamine + phosphate. Its pathway is cell wall biogenesis; peptidoglycan biosynthesis. In terms of biological role, cell wall formation. Adds enolpyruvyl to UDP-N-acetylglucosamine. In Streptococcus agalactiae serotype III (strain NEM316), this protein is UDP-N-acetylglucosamine 1-carboxyvinyltransferase 2.